The primary structure comprises 538 residues: Phosphoenolpyruvate carboxykinase (ATP) (538 aa).

Residues arginine 64, tyrosine 205, and lysine 211 each coordinate substrate. ATP is bound by residues lysine 211, histidine 230, and 246-254 (GLSGTGKTT). 2 residues coordinate Mn(2+): lysine 211 and histidine 230. Aspartate 267 lines the Mn(2+) pocket. Residues glutamate 295, arginine 331, 447-448 (RI), and threonine 453 contribute to the ATP site. Arginine 331 contributes to the substrate binding site.

The protein belongs to the phosphoenolpyruvate carboxykinase (ATP) family. As to quaternary structure, monomer. The cofactor is Mn(2+).

The protein localises to the cytoplasm. It carries out the reaction oxaloacetate + ATP = phosphoenolpyruvate + ADP + CO2. It participates in carbohydrate biosynthesis; gluconeogenesis. Functionally, involved in the gluconeogenesis. Catalyzes the conversion of oxaloacetate (OAA) to phosphoenolpyruvate (PEP) through direct phosphoryl transfer between the nucleoside triphosphate and OAA. The polypeptide is Phosphoenolpyruvate carboxykinase (ATP) (Pasteurella multocida (strain Pm70)).